A 305-amino-acid polypeptide reads, in one-letter code: HPr kinase/phosphorylase (305 aa).

Active-site residues include H136 and K157. 151 to 158 contributes to the ATP binding site; sequence GESGIGKS. S158 is a binding site for Mg(2+). Catalysis depends on D175, which acts as the Proton acceptor; for phosphorylation activity. Proton donor; for dephosphorylation activity. The segment at 198 to 207 is important for the catalytic mechanism of both phosphorylation and dephosphorylation; it reads LEVRGLGIID. E199 serves as a coordination point for Mg(2+). Residue R240 is part of the active site. The important for the catalytic mechanism of dephosphorylation stretch occupies residues 261-266; the sequence is PIRPGR.

The protein belongs to the HPrK/P family. As to quaternary structure, homohexamer. Mg(2+) is required as a cofactor.

It carries out the reaction [HPr protein]-L-serine + ATP = [HPr protein]-O-phospho-L-serine + ADP + H(+). The enzyme catalyses [HPr protein]-O-phospho-L-serine + phosphate + H(+) = [HPr protein]-L-serine + diphosphate. In terms of biological role, catalyzes the ATP- as well as the pyrophosphate-dependent phosphorylation of a specific serine residue in HPr, a phosphocarrier protein of the phosphoenolpyruvate-dependent sugar phosphotransferase system (PTS). HprK/P also catalyzes the pyrophosphate-producing, inorganic phosphate-dependent dephosphorylation (phosphorolysis) of seryl-phosphorylated HPr (P-Ser-HPr). The two antagonistic activities of HprK/P are regulated by several intracellular metabolites, which change their concentration in response to the absence or presence of rapidly metabolisable carbon sources (glucose, fructose, etc.) in the growth medium. Therefore, by controlling the phosphorylation state of HPr, HPrK/P is a sensor enzyme that plays a major role in the regulation of carbon metabolism and sugar transport: it mediates carbon catabolite repression (CCR), and regulates PTS-catalyzed carbohydrate uptake and inducer exclusion. The sequence is that of HPr kinase/phosphorylase from Clostridium tetani (strain Massachusetts / E88).